A 263-amino-acid chain; its full sequence is Large ribosomal subunit protein uL29m (263 aa).

Disordered regions lie at residues 51–92 (ARVT…EELP) and 208–263 (PEID…APRV). Residues 53–66 (VTRDNSKQRGESAL) show a composition bias toward basic and acidic residues. Residues 214–223 (NPENPYTPST) show a composition bias toward polar residues. Residues 233–245 (GAEASETQSTTTE) are compositionally biased toward low complexity. Positions 246–257 (IDPTTIPSSKSQ) are enriched in polar residues.

This sequence belongs to the universal ribosomal protein uL29 family. As to quaternary structure, component of the mitochondrial large ribosomal subunit (mt-LSU). Mature N.crassa 74S mitochondrial ribosomes consist of a small (37S) and a large (54S) subunit. The 37S small subunit contains a 16S ribosomal RNA (16S mt-rRNA) and 32 different proteins. The 54S large subunit contains a 23S rRNA (23S mt-rRNA) and 42 different proteins.

It localises to the mitochondrion. Component of the mitochondrial ribosome (mitoribosome), a dedicated translation machinery responsible for the synthesis of mitochondrial genome-encoded proteins, including at least some of the essential transmembrane subunits of the mitochondrial respiratory chain. The mitoribosomes are attached to the mitochondrial inner membrane and translation products are cotranslationally integrated into the membrane. The sequence is that of Large ribosomal subunit protein uL29m (mrpl4) from Neurospora crassa (strain ATCC 24698 / 74-OR23-1A / CBS 708.71 / DSM 1257 / FGSC 987).